The chain runs to 249 residues: 5'-nucleotidase SurE (249 aa).

Residues Asp9, Asp10, Ser40, and Asn92 each contribute to the a divalent metal cation site.

This sequence belongs to the SurE nucleotidase family. It depends on a divalent metal cation as a cofactor.

The protein localises to the cytoplasm. It catalyses the reaction a ribonucleoside 5'-phosphate + H2O = a ribonucleoside + phosphate. Functionally, nucleotidase that shows phosphatase activity on nucleoside 5'-monophosphates. The polypeptide is 5'-nucleotidase SurE (Shewanella sediminis (strain HAW-EB3)).